The following is a 255-amino-acid chain: 5-oxoprolinase subunit A 1 (255 aa).

The protein belongs to the LamB/PxpA family. Forms a complex composed of PxpA, PxpB and PxpC.

The catalysed reaction is 5-oxo-L-proline + ATP + 2 H2O = L-glutamate + ADP + phosphate + H(+). In terms of biological role, catalyzes the cleavage of 5-oxoproline to form L-glutamate coupled to the hydrolysis of ATP to ADP and inorganic phosphate. This is 5-oxoprolinase subunit A 1 from Agrobacterium fabrum (strain C58 / ATCC 33970) (Agrobacterium tumefaciens (strain C58)).